Reading from the N-terminus, the 622-residue chain is Probable ATP-dependent RNA helicase DDX41 (622 aa).

Over residues 1 to 15 (MEESEPERKRARTDE) the composition is skewed to basic and acidic residues. Disordered stretches follow at residues 1-39 (MEESEPERKRARTDEVPAGGSRSEAEDEDDEDYVPYVPL) and 52-84 (QRRRKGAAEEEQQDSGSEPRGDEDDIPLGPQSN). Ser-4 carries the phosphoserine modification. An N6-acetyllysine modification is found at Lys-9. Residue Lys-9 forms a Glycyl lysine isopeptide (Lys-Gly) (interchain with G-Cter in ubiquitin) linkage. A phosphoserine mark is found at Ser-21 and Ser-23. Position 33 is a phosphotyrosine (Tyr-33). A Glycyl lysine isopeptide (Lys-Gly) (interchain with G-Cter in ubiquitin) cross-link involves residue Lys-115. The Q motif signature appears at 181 to 209 (KSFKEMKFPAAILRGLKKKGIHHPTPIQI). The Helicase ATP-binding domain occupies 212–396 (IPTILSGRDM…KSALVKPVTI (185 aa)). 225 to 232 (AFTGSGKT) provides a ligand contact to ATP. The DEAD box motif lies at 344 to 347 (DEAD). The Helicase C-terminal domain occupies 407-567 (DVIQEVEYVK…KVPPVLQVLH (161 aa)). A Phosphotyrosine; by BTK modification is found at Tyr-414. Glycyl lysine isopeptide (Lys-Gly) (interchain with G-Cter in SUMO2) cross-links involve residues Lys-416 and Lys-442. The CCHC-type zinc finger occupies 580-597 (RGCAFCGGLGHRITDCPK).

It belongs to the DEAD box helicase family. DDX41 subfamily. Identified in the spliceosome C complex. Interacts with ERCC6. Interacts with FAM50A. Interacts with STING1. Interacts with CGAS. Interacts with several spliceosomes components such as PRP19 or CDC5L. In terms of processing, acetylation at Lys-9 regulates the nuclear/cytoplasmic localization. Phosphorylated by BTK; phosphorylation induces binding to dsDNA and STING1. Post-translationally, 'Lys-48'-linked ubiquitinated and degraded by TRIM21 leading to negative regulation of the innate immune response to intracellular dsDNA.

The protein resides in the nucleus. It is found in the cytoplasm. It catalyses the reaction ATP + H2O = ADP + phosphate + H(+). Multifunctional protein that participates in many aspects of cellular RNA metabolism. Plays pivotal roles in innate immune sensing and hematopoietic homeostasis. Recognizes foreign or self-nucleic acids generated during microbial infection, thereby initiating anti-pathogen responses. Mechanistically, phosphorylation by BTK allows binding to dsDNA leading to interaction with STING1. Modulates the homeostasis of dsDNA through its ATP-dependent DNA-unwinding activity and ATP-independent strand-annealing activity. In turn, induces STING1-mediated type I interferon and cytokine responses to DNA and DNA viruses. Selectively modulates the transcription of certain immunity-associated genes by regulating their alternative splicing. Binds to RNA (R)-loops, structures consisting of DNA/RNA hybrids and a displaced strand of DNA that occur during transcription, and prevents their accumulation, thereby maintaining genome stability. Also participates in pre-mRNA splicing, translational regulation and snoRNA processing, which is essential for ribosome biogenesis. This is Probable ATP-dependent RNA helicase DDX41 (DDX41) from Homo sapiens (Human).